The sequence spans 117 residues: uncharacterized protein (117 aa).

This is an uncharacterized protein from Encephalitozoon cuniculi (strain GB-M1) (Microsporidian parasite).